Reading from the N-terminus, the 447-residue chain is N-succinylarginine dihydrolase (447 aa).

Residues 19-28, N110, and 137-138 contribute to the substrate site; these read AGLSFGNEAS and HR. E174 is an active-site residue. R212 contacts substrate. H248 is a catalytic residue. Substrate-binding residues include D250 and N359. The Nucleophile role is filled by C365.

The protein belongs to the succinylarginine dihydrolase family. As to quaternary structure, homodimer.

The catalysed reaction is N(2)-succinyl-L-arginine + 2 H2O + 2 H(+) = N(2)-succinyl-L-ornithine + 2 NH4(+) + CO2. It participates in amino-acid degradation; L-arginine degradation via AST pathway; L-glutamate and succinate from L-arginine: step 2/5. Its function is as follows. Catalyzes the hydrolysis of N(2)-succinylarginine into N(2)-succinylornithine, ammonia and CO(2). The protein is N-succinylarginine dihydrolase of Escherichia coli O81 (strain ED1a).